Consider the following 585-residue polypeptide: Arginine--tRNA ligase (585 aa).

The 'HIGH' region motif lies at alanine 131–histidine 141.

It belongs to the class-I aminoacyl-tRNA synthetase family. In terms of assembly, monomer.

Its subcellular location is the cytoplasm. It catalyses the reaction tRNA(Arg) + L-arginine + ATP = L-arginyl-tRNA(Arg) + AMP + diphosphate. The protein is Arginine--tRNA ligase of Brucella ovis (strain ATCC 25840 / 63/290 / NCTC 10512).